A 366-amino-acid polypeptide reads, in one-letter code: Phospho-N-acetylmuramoyl-pentapeptide-transferase (366 aa).

The next 10 helical transmembrane spans lie at 27-47 (AALF…INSL), 71-91 (TPTM…LLWA), 93-113 (LSNV…AIGF), 134-154 (LGIE…TALA), 174-194 (FLIN…VGAG), 205-225 (GLAI…AYLA), 245-265 (LAVV…FNAP), 268-288 (AIFM…TVAV), 294-314 (IVMA…IIQV), and 343-363 (QVVI…LSTL).

This sequence belongs to the glycosyltransferase 4 family. MraY subfamily. Mg(2+) serves as cofactor.

It is found in the cell inner membrane. The catalysed reaction is UDP-N-acetyl-alpha-D-muramoyl-L-alanyl-gamma-D-glutamyl-meso-2,6-diaminopimeloyl-D-alanyl-D-alanine + di-trans,octa-cis-undecaprenyl phosphate = di-trans,octa-cis-undecaprenyl diphospho-N-acetyl-alpha-D-muramoyl-L-alanyl-D-glutamyl-meso-2,6-diaminopimeloyl-D-alanyl-D-alanine + UMP. It participates in cell wall biogenesis; peptidoglycan biosynthesis. In terms of biological role, catalyzes the initial step of the lipid cycle reactions in the biosynthesis of the cell wall peptidoglycan: transfers peptidoglycan precursor phospho-MurNAc-pentapeptide from UDP-MurNAc-pentapeptide onto the lipid carrier undecaprenyl phosphate, yielding undecaprenyl-pyrophosphoryl-MurNAc-pentapeptide, known as lipid I. This is Phospho-N-acetylmuramoyl-pentapeptide-transferase from Rhizobium etli (strain ATCC 51251 / DSM 11541 / JCM 21823 / NBRC 15573 / CFN 42).